The following is a 282-amino-acid chain: Bifunctional protein FolD (282 aa).

NADP(+)-binding positions include 165 to 167 (GRS), serine 190, and threonine 231.

Belongs to the tetrahydrofolate dehydrogenase/cyclohydrolase family. In terms of assembly, homodimer.

It carries out the reaction (6R)-5,10-methylene-5,6,7,8-tetrahydrofolate + NADP(+) = (6R)-5,10-methenyltetrahydrofolate + NADPH. The enzyme catalyses (6R)-5,10-methenyltetrahydrofolate + H2O = (6R)-10-formyltetrahydrofolate + H(+). It functions in the pathway one-carbon metabolism; tetrahydrofolate interconversion. Its function is as follows. Catalyzes the oxidation of 5,10-methylenetetrahydrofolate to 5,10-methenyltetrahydrofolate and then the hydrolysis of 5,10-methenyltetrahydrofolate to 10-formyltetrahydrofolate. This Clostridium beijerinckii (strain ATCC 51743 / NCIMB 8052) (Clostridium acetobutylicum) protein is Bifunctional protein FolD.